Here is a 262-residue protein sequence, read N- to C-terminus: G patch domain-containing protein 11 (262 aa).

Basic and acidic residues-rich tracts occupy residues 39–61 (LHKEKDIQNRQKSFKEQEKESRE), 114–127 (EEVKKRKADEELQN), and 136–165 (QHLEKKSIEDFRVRKRTEREERQTQGDLRK). 2 disordered regions span residues 39–71 (LHKEKDIQNRQKSFKEQEKESREAALQSSIGSQ) and 88–169 (GLGK…SQRA). Residues 41 to 62 (KEKDIQNRQKSFKEQEKESREA) adopt a coiled-coil conformation. The G-patch domain occupies 70–116 (SQNKGFALLQKMGYKAGQGLGKEGAGRVEPVPLNIKTDRGGIGMEEV).

It belongs to the GPATCH11 family.

Its subcellular location is the chromosome. It localises to the centromere. It is found in the kinetochore. The chain is G patch domain-containing protein 11 (gpatch11) from Danio rerio (Zebrafish).